The primary structure comprises 189 residues: uncharacterized protein (189 aa).

An HTH tetR-type domain is found at 9–69 (ADTGGRILRA…SMLTSHIADV (61 aa)). Residues 32–51 (TLAEIARRAGVSRPTVYRRW) constitute a DNA-binding region (H-T-H motif).

This is an uncharacterized protein from Mycobacterium tuberculosis (strain CDC 1551 / Oshkosh).